Consider the following 345-residue polypeptide: 3-dehydroquinate synthase (345 aa).

Residues 86–90 (GALLD), 110–111 (TT), Lys-123, and Lys-132 each bind NAD(+). Positions 165, 229, and 243 each coordinate Zn(2+).

Belongs to the sugar phosphate cyclases superfamily. Dehydroquinate synthase family. Requires NAD(+) as cofactor. It depends on Co(2+) as a cofactor. The cofactor is Zn(2+).

It localises to the cytoplasm. It carries out the reaction 7-phospho-2-dehydro-3-deoxy-D-arabino-heptonate = 3-dehydroquinate + phosphate. It functions in the pathway metabolic intermediate biosynthesis; chorismate biosynthesis; chorismate from D-erythrose 4-phosphate and phosphoenolpyruvate: step 2/7. In terms of biological role, catalyzes the conversion of 3-deoxy-D-arabino-heptulosonate 7-phosphate (DAHP) to dehydroquinate (DHQ). In Pyrobaculum aerophilum (strain ATCC 51768 / DSM 7523 / JCM 9630 / CIP 104966 / NBRC 100827 / IM2), this protein is 3-dehydroquinate synthase.